The primary structure comprises 404 residues: MNSPLPNSYRSGPDDRGHFGLFGGRFVAETLMPLILDLEKAYAEAKIDPAFRAEMDGHLKHYVGRPSPLYFAERLTDHFGGAKIYFKREDLNHTGAHKVNNVLGQIMLARRMGKPRIIAETGAGMHGVATATLCAKFGLKCVVFMGAVDIDRQEPNVLRMKALGAEVRPVTSGAATLKDAMNEALRDWVTNVHDTFYCIGTVAGPHPYPMMVRDFQSVIGHEVREQIMQLEGRLPDSLIACIGGGSNAMGLFHPFLDDPEVAIYGVEAAGHGLSKLHAASIAGGKPGVLHGNRTYLLMDGDGQIQEAHSISAGLDYPGIGPEHAWLHDVGRVNFLSATDTEALDAFKLCCRLEGIIPALEPSHALAKVADLAPKLPKDHLMVLNMSGRGDKDLASVAEHLGGQF.

K98 carries the N6-(pyridoxal phosphate)lysine modification.

The protein belongs to the TrpB family. Tetramer of two alpha and two beta chains. Pyridoxal 5'-phosphate serves as cofactor.

It catalyses the reaction (1S,2R)-1-C-(indol-3-yl)glycerol 3-phosphate + L-serine = D-glyceraldehyde 3-phosphate + L-tryptophan + H2O. Its pathway is amino-acid biosynthesis; L-tryptophan biosynthesis; L-tryptophan from chorismate: step 5/5. The beta subunit is responsible for the synthesis of L-tryptophan from indole and L-serine. This is Tryptophan synthase beta chain from Rhodopseudomonas palustris (strain BisA53).